The primary structure comprises 244 residues: 1-(5-phosphoribosyl)-5-[(5-phosphoribosylamino)methylideneamino] imidazole-4-carboxamide isomerase (244 aa).

Residue D8 is the Proton acceptor of the active site. The active-site Proton donor is D130.

It belongs to the HisA/HisF family.

The protein resides in the cytoplasm. The enzyme catalyses 1-(5-phospho-beta-D-ribosyl)-5-[(5-phospho-beta-D-ribosylamino)methylideneamino]imidazole-4-carboxamide = 5-[(5-phospho-1-deoxy-D-ribulos-1-ylimino)methylamino]-1-(5-phospho-beta-D-ribosyl)imidazole-4-carboxamide. It participates in amino-acid biosynthesis; L-histidine biosynthesis; L-histidine from 5-phospho-alpha-D-ribose 1-diphosphate: step 4/9. This Syntrophomonas wolfei subsp. wolfei (strain DSM 2245B / Goettingen) protein is 1-(5-phosphoribosyl)-5-[(5-phosphoribosylamino)methylideneamino] imidazole-4-carboxamide isomerase.